The primary structure comprises 770 residues: Protein PAT1 homolog 1 (770 aa).

Positions 1-42 are disordered; sequence MFRYESLEDCPLDEDEDAFQGLGEEDEEIDQFNDDTFGSGAV. The interval 1 to 84 is region A; interaction with DDX6/RCK; it reads MFRYESLEDC…EMDLLGDHEE (84 aa). The involved in nuclear foci localization stretch occupies residues 1–397; it reads MFRYESLEDC…HRVSHQDHLR (397 aa). Residues 7–33 show a composition bias toward acidic residues; that stretch reads LEDCPLDEDEDAFQGLGEEDEEIDQFN. Residues 85 to 388 form a region N; interaction with decapping machinery region; sequence NLAERLSKMV…LNGTGDRGGH (304 aa). A Nuclear export signal motif is present at residues 86 to 95; the sequence is LAERLSKMVI. The residue at position 177 (S177) is a Phosphoserine. T178 is modified (phosphothreonine). Residues S179 and S184 each carry the phosphoserine modification. T194 bears the Phosphothreonine mark. 3 positions are modified to asymmetric dimethylarginine: R217, R223, and R263. The tract at residues 223–397 is involved in RNA-binding; that stretch reads RYPAPYGERM…HRVSHQDHLR (175 aa). Position 278 is a phosphoserine (S278). R284 bears the Asymmetric dimethylarginine mark. Disordered stretches follow at residues 320 to 341 and 369 to 394; these read SAPP…PHLQ and QLQS…SHQD. Residues 321 to 337 are compositionally biased toward pro residues; it reads APPPATPPPQQHPPGPG. Residues 369–380 show a composition bias toward low complexity; that stretch reads QLQSRNQHRNLN. R385 is modified (omega-N-methylarginine). Positions 385 to 394 are enriched in basic and acidic residues; it reads RGGHRVSHQD. The region H stretch occupies residues 389–448; sequence RVSHQDHLRKDPYANLMLQREKDWVSKIQMMQLQSTDPYLDDFYYQNYFEKLEKSSAAEE. The involved in nuclear speckle localization stretch occupies residues 398–770; it reads KDPYANLMLQ…TKLQLVQGMR (373 aa). Residues 449-770 are region C; it reads MQGDGPKKER…TKLQLVQGMR (322 aa).

The protein belongs to the PAT1 family. As to quaternary structure, interacts (via region A) with DDX6/RCK. Interacts (via region H and region C) with LSM1 and LSM4. Interacts (via region N) with DCP1A, DCP2, EDC3, EDC4 and XRN1. Interacts with the CCR4-NOT complex. Interacts with the Lsm-containing SMN-Sm protein complex. Interacts with EIF4ENIF1/4E-T.

Its subcellular location is the cytoplasm. It is found in the P-body. It localises to the nucleus. The protein localises to the PML body. The protein resides in the nucleus speckle. Functionally, RNA-binding protein involved in deadenylation-dependent decapping of mRNAs, leading to the degradation of mRNAs. Acts as a scaffold protein that connects deadenylation and decapping machinery. Required for cytoplasmic mRNA processing body (P-body) assembly. The protein is Protein PAT1 homolog 1 (Patl1) of Rattus norvegicus (Rat).